The chain runs to 219 residues: Small ribosomal subunit protein uS19 (219 aa).

A unknown region spans residues 1 to 128 (MGFKGAWNKR…YEEIYAQYKQ (128 aa)). The small ribosomal subunit protein uS19 stretch occupies residues 129–219 (MTEKKAYVDP…DKTAKVVKKK (91 aa)).

Belongs to the universal ribosomal protein uS19 family.

In terms of biological role, protein S19 forms a complex with S13 that binds strongly to the 16S ribosomal RNA. The polypeptide is Small ribosomal subunit protein uS19 (Aquifex pyrophilus).